The sequence spans 341 residues: tRNA N6-adenosine threonylcarbamoyltransferase (341 aa).

His-111 and His-115 together coordinate Fe cation. Substrate is bound by residues 134-138 (LVSGG), Asp-167, Gly-180, and Asn-276. A Fe cation-binding site is contributed by Asp-304.

This sequence belongs to the KAE1 / TsaD family. The cofactor is Fe(2+).

It localises to the cytoplasm. It catalyses the reaction L-threonylcarbamoyladenylate + adenosine(37) in tRNA = N(6)-L-threonylcarbamoyladenosine(37) in tRNA + AMP + H(+). Required for the formation of a threonylcarbamoyl group on adenosine at position 37 (t(6)A37) in tRNAs that read codons beginning with adenine. Is involved in the transfer of the threonylcarbamoyl moiety of threonylcarbamoyl-AMP (TC-AMP) to the N6 group of A37, together with TsaE and TsaB. TsaD likely plays a direct catalytic role in this reaction. This Pseudomonas syringae pv. tomato (strain ATCC BAA-871 / DC3000) protein is tRNA N6-adenosine threonylcarbamoyltransferase.